A 299-amino-acid polypeptide reads, in one-letter code: Proline iminopeptidase (299 aa).

Residues 26 to 272 enclose the AB hydrolase-1 domain; it reads VLLLAGGPGF…QFLYCANGSH (247 aa). Serine 103 (nucleophile) is an active-site residue. The active site involves aspartate 245. Histidine 272 (proton donor) is an active-site residue.

It belongs to the peptidase S33 family. Monomer.

It catalyses the reaction Release of N-terminal proline from a peptide.. Its function is as follows. Releases the N-terminal proline from various substrates. The protein is Proline iminopeptidase of Chitinophaga pinensis (strain ATCC 43595 / DSM 2588 / LMG 13176 / NBRC 15968 / NCIMB 11800 / UQM 2034).